A 114-amino-acid chain; its full sequence is Fluoride-specific ion channel FluC 2 (114 aa).

A run of 4 helical transmembrane segments spans residues 3–23, 31–51, 57–77, and 92–112; these read YVIIGGAVGACLRFAVSECWL, LMTAVFVINISGCAMLGWILA, GIELLFISMLGGFTTFSTFCM, and MIYLVISIVGSLFGFLFGWNV. Positions 67 and 70 each coordinate Na(+).

This sequence belongs to the fluoride channel Fluc/FEX (TC 1.A.43) family.

It is found in the cell membrane. The enzyme catalyses fluoride(in) = fluoride(out). Its activity is regulated as follows. Na(+) is not transported, but it plays an essential structural role and its presence is essential for fluoride channel function. Functionally, fluoride-specific ion channel. Important for reducing fluoride concentration in the cell, thus reducing its toxicity. The protein is Fluoride-specific ion channel FluC 2 of Shouchella clausii (strain KSM-K16) (Alkalihalobacillus clausii).